Consider the following 318-residue polypeptide: D-alanine--D-alanine ligase B (318 aa).

The region spanning 116-311 is the ATP-grasp domain; that stretch reads KQVWQSLGIP…FQQLVLAILA (196 aa). Position 142–197 (142–197) interacts with ATP; sequence STELGFPLIVKPAHEGSSIGMAKVNSTQELVAAWQDAAKYDSQVLVEQWIHGPEFT. Residues Asp-265, Glu-278, and Asn-280 each contribute to the Mg(2+) site.

The protein belongs to the D-alanine--D-alanine ligase family. Mg(2+) is required as a cofactor. Requires Mn(2+) as cofactor.

Its subcellular location is the cytoplasm. It carries out the reaction 2 D-alanine + ATP = D-alanyl-D-alanine + ADP + phosphate + H(+). It participates in cell wall biogenesis; peptidoglycan biosynthesis. Its function is as follows. Cell wall formation. This chain is D-alanine--D-alanine ligase B, found in Pseudomonas putida (strain ATCC 47054 / DSM 6125 / CFBP 8728 / NCIMB 11950 / KT2440).